We begin with the raw amino-acid sequence, 50 residues long: uncharacterized protein (50 aa).

This is an uncharacterized protein from Haemophilus influenzae (strain ATCC 51907 / DSM 11121 / KW20 / Rd).